The following is a 1058-amino-acid chain: Isoleucine--tRNA ligase (1058 aa).

The short motif at 48–58 (PYTTGHIHLGT) is the 'HIGH' region element. Residues 596–600 (KMSKS) carry the 'KMSKS' region motif. Lys-599 contacts ATP.

Belongs to the class-I aminoacyl-tRNA synthetase family. IleS type 2 subfamily. Monomer. Requires Zn(2+) as cofactor.

It localises to the cytoplasm. It catalyses the reaction tRNA(Ile) + L-isoleucine + ATP = L-isoleucyl-tRNA(Ile) + AMP + diphosphate. Catalyzes the attachment of isoleucine to tRNA(Ile). As IleRS can inadvertently accommodate and process structurally similar amino acids such as valine, to avoid such errors it has two additional distinct tRNA(Ile)-dependent editing activities. One activity is designated as 'pretransfer' editing and involves the hydrolysis of activated Val-AMP. The other activity is designated 'posttransfer' editing and involves deacylation of mischarged Val-tRNA(Ile). The sequence is that of Isoleucine--tRNA ligase from Methanosarcina acetivorans (strain ATCC 35395 / DSM 2834 / JCM 12185 / C2A).